The primary structure comprises 319 residues: Acetyl-coenzyme A carboxylase carboxyl transferase subunit alpha (319 aa).

Residues 35-296 (NLDEEVQRLR…KAQLLADLSD (262 aa)) enclose the CoA carboxyltransferase C-terminal domain.

It belongs to the AccA family. In terms of assembly, acetyl-CoA carboxylase is a heterohexamer composed of biotin carboxyl carrier protein (AccB), biotin carboxylase (AccC) and two subunits each of ACCase subunit alpha (AccA) and ACCase subunit beta (AccD).

It localises to the cytoplasm. The enzyme catalyses N(6)-carboxybiotinyl-L-lysyl-[protein] + acetyl-CoA = N(6)-biotinyl-L-lysyl-[protein] + malonyl-CoA. Its pathway is lipid metabolism; malonyl-CoA biosynthesis; malonyl-CoA from acetyl-CoA: step 1/1. Functionally, component of the acetyl coenzyme A carboxylase (ACC) complex. First, biotin carboxylase catalyzes the carboxylation of biotin on its carrier protein (BCCP) and then the CO(2) group is transferred by the carboxyltransferase to acetyl-CoA to form malonyl-CoA. This Yersinia enterocolitica serotype O:8 / biotype 1B (strain NCTC 13174 / 8081) protein is Acetyl-coenzyme A carboxylase carboxyl transferase subunit alpha.